The primary structure comprises 254 residues: MWVYRLKGTLEALDPILPGLFDGGARGLWEREGEVWAFFPAPVDLPYEGVWEEVGDEDWLEAWRRDLKPALAPPFVVLAPWHTWEGAEIPLVIEPGMAFGTGHHETTRLALKALARHLRPGDKVLDLGTGSGVLAIAAEKLGGKALGVDIDPMVLPQAEANAKRNGVRPRFLEGSLEAALPFGPFDLLVANLYAELHAALAPRYREALVPGGRALLTGILKDRAPLVREAMAGAGFRPLEEAAEGEWVLLAYGR.

5 residues coordinate S-adenosyl-L-methionine: T107, G128, D149, S175, and N191.

This sequence belongs to the methyltransferase superfamily. PrmA family.

The protein resides in the cytoplasm. It catalyses the reaction L-lysyl-[protein] + 3 S-adenosyl-L-methionine = N(6),N(6),N(6)-trimethyl-L-lysyl-[protein] + 3 S-adenosyl-L-homocysteine + 3 H(+). It carries out the reaction an N-terminal L-alpha-aminoacyl-[protein] + 3 S-adenosyl-L-methionine = an N-terminal trimethyl-L-alpha-aminoacyl-[protein] + 3 S-adenosyl-L-homocysteine + 3 H(+). Its function is as follows. Methylates ribosomal protein L11. Preferentially recognizes free L11 before its incorporation into 50S subunits. This function is dispensable for growth and thermostability. The chain is Ribosomal protein L11 methyltransferase from Thermus thermophilus (strain ATCC 27634 / DSM 579 / HB8).